We begin with the raw amino-acid sequence, 302 residues long: Heme A synthase (302 aa).

Residues 1–8 (MFRKQNLK) are Cytoplasmic-facing. The chain crosses the membrane as a helical span at residues 9–29 (WLGVLATIIMTFVQLGGALVT). The Extracellular portion of the chain corresponds to 30–67 (KTGSEDGCGSSWPLCNGALLPENLPIQTIIELSHRAVS). Cysteines 37 and 44 form a disulfide. The active site involves Glu60. His63 serves as a coordination point for heme o. The helical transmembrane segment at 68–88 (AISLIVVLWLVITAWKNIGYI) threads the bilayer. At 89–93 (KEIKP) the chain is on the cytoplasmic side. A helical membrane pass occupies residues 94 to 114 (LSIISVGFLLVQALVGAAAVI). Residues 115 to 125 (WQQNPYVLALH) are Extracellular-facing. Residue His125 coordinates heme o. The chain crosses the membrane as a helical span at residues 126 to 146 (FGISLISFSSVFLMTLIIFSI). Over 147–161 (DKKYEADILFIHKPL) the chain is Cytoplasmic. A helical membrane pass occupies residues 162 to 182 (RILTWLMAIIVYLTIYTGALV). Residues 183–215 (RHTKSSLAYGAWPIPFDDIVPHNAHDWVQFSHR) lie on the Extracellular side of the membrane. His214 is a heme b binding site. Residues 216–236 (GMALITFIWIMITFIHAIKNY) traverse the membrane as a helical segment. At 237-244 (SDNRTVRY) the chain is on the cytoplasmic side. Residues 245–265 (GYTASFILVILQVITGALSVI) form a helical membrane-spanning segment. Residues 266–270 (TNVNL) lie on the Extracellular side of the membrane. Residues 271 to 291 (IIALFHALFITYLFGMIAYFI) traverse the membrane as a helical segment. His276 lines the heme b pocket. At 292-302 (LLMLRTTRSQK) the chain is on the cytoplasmic side.

It belongs to the COX15/CtaA family. Type 1 subfamily. Interacts with CtaB. Heme b is required as a cofactor.

It is found in the cell membrane. It catalyses the reaction Fe(II)-heme o + 2 A + H2O = Fe(II)-heme a + 2 AH2. It functions in the pathway porphyrin-containing compound metabolism; heme A biosynthesis; heme A from heme O: step 1/1. In terms of biological role, catalyzes the conversion of heme O to heme A by two successive hydroxylations of the methyl group at C8. The first hydroxylation forms heme I, the second hydroxylation results in an unstable dihydroxymethyl group, which spontaneously dehydrates, resulting in the formyl group of heme A. This chain is Heme A synthase, found in Staphylococcus epidermidis (strain ATCC 35984 / DSM 28319 / BCRC 17069 / CCUG 31568 / BM 3577 / RP62A).